The chain runs to 332 residues: GTP 3',8-cyclase (332 aa).

A Radical SAM core domain is found at 9–220 (GYNRRVDYLR…TQVRERIAER (212 aa)). Arginine 18 is a GTP binding site. Residues cysteine 25 and cysteine 29 each contribute to the [4Fe-4S] cluster site. S-adenosyl-L-methionine is bound at residue tyrosine 31. [4Fe-4S] cluster is bound at residue cysteine 32. Arginine 67 is a binding site for GTP. Glycine 71 lines the S-adenosyl-L-methionine pocket. Threonine 98 is a GTP binding site. Serine 122 provides a ligand contact to S-adenosyl-L-methionine. Lysine 159 contacts GTP. Methionine 193 contributes to the S-adenosyl-L-methionine binding site. [4Fe-4S] cluster-binding residues include cysteine 258 and cysteine 261. 263-265 (RVR) provides a ligand contact to GTP. Position 275 (cysteine 275) interacts with [4Fe-4S] cluster.

This sequence belongs to the radical SAM superfamily. MoaA family. As to quaternary structure, monomer and homodimer. It depends on [4Fe-4S] cluster as a cofactor.

It carries out the reaction GTP + AH2 + S-adenosyl-L-methionine = (8S)-3',8-cyclo-7,8-dihydroguanosine 5'-triphosphate + 5'-deoxyadenosine + L-methionine + A + H(+). The protein operates within cofactor biosynthesis; molybdopterin biosynthesis. In terms of biological role, catalyzes the cyclization of GTP to (8S)-3',8-cyclo-7,8-dihydroguanosine 5'-triphosphate. In Pseudomonas fluorescens (strain Pf0-1), this protein is GTP 3',8-cyclase.